Here is a 1331-residue protein sequence, read N- to C-terminus: NPC1-like intracellular cholesterol transporter 1 (1331 aa).

The N-terminal stretch at 1 to 20 is a signal peptide; it reads MAAAWLGWLLWALLLSAAQG. Topologically, residues 21–282 are extracellular; that stretch reads ELYTPKHEAG…RPSFYMGRMP (262 aa). Disulfide bonds link Cys-32/Cys-90, Cys-38/Cys-56, Cys-77/Cys-125, Cys-91/Cys-129, Cys-113/Cys-254, Cys-116/Cys-172, Cys-189/Cys-197, Cys-243/Cys-259, and Cys-256/Cys-263. Residues Asn-53 and Asn-85 are each glycosylated (N-linked (GlcNAc...) asparagine). A glycan (N-linked (GlcNAc...) asparagine) is linked at Asn-138. Asn-244 is a glycosylation site (N-linked (GlcNAc...) asparagine). A helical transmembrane segment spans residues 283–303; that stretch reads GWLALIIIFTAVFVLLSAVLV. The Cytoplasmic portion of the chain corresponds to 304 to 352; it reads RLRVVSNRNKNKAEGPQEAPKLPHKHKLSPHTILGRFFQNWGTRVASWP. A helical membrane pass occupies residues 353-373; sequence LTVLALSFIVVIALAAGLTFI. At 374–632 the chain is on the extracellular side; that stretch reads ELTTDPVELW…DEINRTTIQD (259 aa). Residues Asn-416, Asn-431, Asn-464, Asn-479, Asn-497, and Asn-506 are each glycosylated (N-linked (GlcNAc...) asparagine). A disulfide bond links Cys-471 and Cys-485. The cysteines at positions 525 and 542 are disulfide-linked. N-linked (GlcNAc...) asparagine glycans are attached at residues Asn-606 and Asn-626. The 166-residue stretch at 632-797 folds into the SSD domain; the sequence is DLPVFAVSYI…MTAFVALLSL (166 aa). Residues 633–653 form a helical membrane-spanning segment; it reads LPVFAVSYIIVFLYISLALGS. The Cytoplasmic segment spans residues 654 to 665; the sequence is YSRCSRVAVESK. The helical transmembrane segment at 666–686 threads the bilayer; that stretch reads ATLGLGGVIVVLGAVLAAMGF. Topologically, residues 687–696 are extracellular; that stretch reads YSYLGVPSSL. Residues 697–717 traverse the membrane as a helical segment; it reads VIIQVVPFLVLAVGADNIFIF. The Cytoplasmic segment spans residues 718–742; sequence VLEYQRLPRMPGEQREAHIGRTLGS. The chain crosses the membrane as a helical span at residues 743 to 763; sequence VAPSMLLCSLSEAICFFLGAL. At 764-776 the chain is on the extracellular side; it reads TPMPAVRTFALTS. Residues 777–797 traverse the membrane as a helical segment; the sequence is GLAIILDFLLQMTAFVALLSL. The Cytoplasmic segment spans residues 798 to 846; it reads DSKRQEASRPDVLCCFSTRKLPPPKEKEGLLLRFFRKIYAPFLLHRFIR. Residues 847-867 traverse the membrane as a helical segment; the sequence is PVVMLLFLTLFGANLYLMCNI. Residues 868 to 1113 lie on the Extracellular side of the membrane; that stretch reads NVGLDQELAL…QQYLTVLPEG (246 aa). Residues Asn-909 and Asn-917 are each glycosylated (N-linked (GlcNAc...) asparagine). 3 disulfides stabilise this stretch: Cys-920–Cys-925, Cys-967–Cys-1025, and Cys-981–Cys-990. N-linked (GlcNAc...) asparagine glycans are attached at residues Asn-996, Asn-1038, and Asn-1076. A helical membrane pass occupies residues 1114–1134; sequence IFTLALCFVPTFVVCYLLLGL. The Cytoplasmic segment spans residues 1135–1142; it reads DMCSGILN. Residues 1143 to 1163 traverse the membrane as a helical segment; the sequence is LLSIIMILVDTIGLMAVWGIS. The Extracellular portion of the chain corresponds to 1164 to 1165; the sequence is YN. Residues 1166–1186 form a helical membrane-spanning segment; the sequence is AVSLINLVTAVGMSVEFVSHI. Topologically, residues 1187 to 1206 are cytoplasmic; sequence TRSFAVSTKPTRLERAKDAT. Residues 1207–1227 form a helical membrane-spanning segment; sequence VFMGSAVFAGVAMTNFPGILI. The Extracellular segment spans residues 1228–1242; sequence LGFAQAQLIQIFFFR. The chain crosses the membrane as a helical span at residues 1243–1263; sequence LNLLITLLGLLHGLVFLPVVL. Over 1264–1331 the chain is Cytoplasmic; sequence SYLGPDVNQA…SSLPKSDQKF (68 aa).

The protein belongs to the patched family. In terms of assembly, interacts with RAB11A, MYO5B and RAB11FIP2. Interaction with RAB11A, MYO5B and RAB11FIP2 is required for proper transport to the plasma membrane upon cholesterol depletion. Interacts with NPC2. Interacts with LIMA1. Highly glycosylated. In terms of tissue distribution, small intestine showed the highest level of expression. Expression in other tissues including gall bladder, liver, testis and stomach is also observed. Along the duodenum-ileum axis, the levels vary in different segments of the intestine with peak expression in the proximal jejunum. Protein expression is confined to the enterocyte. Discrete localization to the epithelial layer bordering the luminal space along the crypt-villus axis. Protein expression in the enterocyte is observed closest to the luminal space. Expression in enterocytes from the proximal (jejunum) but not in the distal (ileum) region.

It is found in the apical cell membrane. The protein localises to the cell membrane. It catalyses the reaction cholesterol(in) = cholesterol(out). The catalysed reaction is sitosterol(out) = sitosterol(in). Plays a major role in cholesterol homeostasis. Critical for the uptake of cholesterol across the plasma membrane of the intestinal enterocyte. Involved in plant sterol absorption, it transports sitosterol, although at lower rates than cholesterol. Is the direct molecular target of ezetimibe, a drug that inhibits cholesterol absorption and is approved for the treatment of hypercholesterolemia. May have a function in the transport of multiple lipids and their homeostasis, thereby influencing lipid metabolism regulation. May be involved in caveolin trafficking from the plasma membrane. Acts as a negative regulator of NPC2 and down-regulates its expression and secretion by inhibiting its maturation and accelerating its degradation. The chain is NPC1-like intracellular cholesterol transporter 1 from Rattus norvegicus (Rat).